Consider the following 433-residue polypeptide: 3-phosphoshikimate 1-carboxyvinyltransferase (433 aa).

3-phosphoshikimate-binding residues include Lys-22, Ser-23, and Arg-27. Residue Lys-22 participates in phosphoenolpyruvate binding. Gly-95 and Arg-123 together coordinate phosphoenolpyruvate. 4 residues coordinate 3-phosphoshikimate: Ser-167, Gln-169, Asp-315, and Lys-342. Gln-169 contacts phosphoenolpyruvate. Asp-315 acts as the Proton acceptor in catalysis. Phosphoenolpyruvate contacts are provided by Arg-346 and Arg-387.

This sequence belongs to the EPSP synthase family. Monomer.

The protein localises to the cytoplasm. It catalyses the reaction 3-phosphoshikimate + phosphoenolpyruvate = 5-O-(1-carboxyvinyl)-3-phosphoshikimate + phosphate. It functions in the pathway metabolic intermediate biosynthesis; chorismate biosynthesis; chorismate from D-erythrose 4-phosphate and phosphoenolpyruvate: step 6/7. Functionally, catalyzes the transfer of the enolpyruvyl moiety of phosphoenolpyruvate (PEP) to the 5-hydroxyl of shikimate-3-phosphate (S3P) to produce enolpyruvyl shikimate-3-phosphate and inorganic phosphate. The protein is 3-phosphoshikimate 1-carboxyvinyltransferase of Legionella pneumophila subsp. pneumophila (strain Philadelphia 1 / ATCC 33152 / DSM 7513).